Reading from the N-terminus, the 303-residue chain is Probable 5-dehydro-4-deoxyglucarate dehydratase (303 aa).

This sequence belongs to the DapA family.

It catalyses the reaction 5-dehydro-4-deoxy-D-glucarate + H(+) = 2,5-dioxopentanoate + CO2 + H2O. Its pathway is carbohydrate acid metabolism; D-glucarate degradation; 2,5-dioxopentanoate from D-glucarate: step 2/2. This Polaromonas naphthalenivorans (strain CJ2) protein is Probable 5-dehydro-4-deoxyglucarate dehydratase.